The chain runs to 116 residues: Phosphoribosyl-AMP cyclohydrolase (116 aa).

Aspartate 85 contacts Mg(2+). Residue cysteine 86 coordinates Zn(2+). The Mg(2+) site is built by aspartate 87 and aspartate 89. Residues cysteine 102 and cysteine 109 each contribute to the Zn(2+) site.

The protein belongs to the PRA-CH family. Homodimer. The cofactor is Mg(2+). Zn(2+) serves as cofactor.

Its subcellular location is the cytoplasm. It carries out the reaction 1-(5-phospho-beta-D-ribosyl)-5'-AMP + H2O = 1-(5-phospho-beta-D-ribosyl)-5-[(5-phospho-beta-D-ribosylamino)methylideneamino]imidazole-4-carboxamide. Its pathway is amino-acid biosynthesis; L-histidine biosynthesis; L-histidine from 5-phospho-alpha-D-ribose 1-diphosphate: step 3/9. In terms of biological role, catalyzes the hydrolysis of the adenine ring of phosphoribosyl-AMP. The protein is Phosphoribosyl-AMP cyclohydrolase of Thermobifida fusca (strain YX).